The following is a 287-amino-acid chain: Elongation factor Ts (287 aa).

Residues 77–80 (TDFV) form an involved in Mg(2+) ion dislocation from EF-Tu region.

Belongs to the EF-Ts family.

It is found in the cytoplasm. Functionally, associates with the EF-Tu.GDP complex and induces the exchange of GDP to GTP. It remains bound to the aminoacyl-tRNA.EF-Tu.GTP complex up to the GTP hydrolysis stage on the ribosome. In Wolbachia sp. subsp. Brugia malayi (strain TRS), this protein is Elongation factor Ts.